We begin with the raw amino-acid sequence, 470 residues long: GTPase Der (470 aa).

EngA-type G domains follow at residues 32–195 (PVVA…PTIS) and 206–379 (RRVA…KSWD). GTP-binding positions include 38 to 45 (GRPNVGKS), 85 to 89 (DTGGW), 147 to 150 (NKVD), 212 to 219 (GKPNVGKS), 259 to 263 (DTAGL), and 324 to 327 (NKWD). In terms of domain architecture, KH-like spans 380-462 (TRVSTGRLNT…PIRINVRVRE (83 aa)).

It belongs to the TRAFAC class TrmE-Era-EngA-EngB-Septin-like GTPase superfamily. EngA (Der) GTPase family. As to quaternary structure, associates with the 50S ribosomal subunit.

Its function is as follows. GTPase that plays an essential role in the late steps of ribosome biogenesis. This is GTPase Der from Mycolicibacterium vanbaalenii (strain DSM 7251 / JCM 13017 / BCRC 16820 / KCTC 9966 / NRRL B-24157 / PYR-1) (Mycobacterium vanbaalenii).